A 485-amino-acid polypeptide reads, in one-letter code: Iroquois-class homeodomain protein IRX-4 (485 aa).

A DNA-binding region (homeobox; TALE-type) is located at residues 142–203 (GTRRKNATRE…NARRRLKKEN (62 aa)). Positions 206-313 (TWPPRNKCSD…EEEEAAERAR (108 aa)) are disordered. The segment covering 221–232 (EEEEEEEEECSQ) has biased composition (acidic residues). Over residues 234-253 (DAMKSEKAEEPTGKEEKELE) the composition is skewed to basic and acidic residues. Residues 254–269 (LSDLEDLDAAESESSE) show a composition bias toward acidic residues. The span at 282–294 (HPLPGGGPPPRAA) shows a compositional bias: pro residues.

The protein belongs to the TALE/IRO homeobox family. In terms of tissue distribution, ventricles of the heart, developing feather buds, retina, hindbrain.

It localises to the nucleus. In terms of biological role, regulates the chamber-specific expression of myosin isoforms by activating the expression of the ventricle myosin heavy chain-1 (Vmhc1) and suppressing the expression of the atrial myosin heavy chain-1 (Amhc1) in the ventricles. May play a critical role in establishing chamber-specific gene expression in the developing heart. This chain is Iroquois-class homeodomain protein IRX-4 (IRX4), found in Gallus gallus (Chicken).